A 334-amino-acid chain; its full sequence is Glycerol-3-phosphate dehydrogenase [NAD(P)+] (334 aa).

The NADPH site is built by tryptophan 13, arginine 33, and lysine 106. Residues lysine 106, glycine 137, and serine 139 each coordinate sn-glycerol 3-phosphate. An NADPH-binding site is contributed by alanine 141. Residues lysine 192, aspartate 245, serine 255, arginine 256, and asparagine 257 each coordinate sn-glycerol 3-phosphate. The active-site Proton acceptor is lysine 192. NADPH is bound at residue arginine 256. NADPH is bound by residues valine 280 and glutamate 282.

Belongs to the NAD-dependent glycerol-3-phosphate dehydrogenase family.

The protein localises to the cytoplasm. It carries out the reaction sn-glycerol 3-phosphate + NAD(+) = dihydroxyacetone phosphate + NADH + H(+). The enzyme catalyses sn-glycerol 3-phosphate + NADP(+) = dihydroxyacetone phosphate + NADPH + H(+). The protein operates within membrane lipid metabolism; glycerophospholipid metabolism. Functionally, catalyzes the reduction of the glycolytic intermediate dihydroxyacetone phosphate (DHAP) to sn-glycerol 3-phosphate (G3P), the key precursor for phospholipid synthesis. This is Glycerol-3-phosphate dehydrogenase [NAD(P)+] from Chlamydia trachomatis serovar A (strain ATCC VR-571B / DSM 19440 / HAR-13).